The sequence spans 726 residues: Putative tyrosine-protein kinase AmsA (726 aa).

Transmembrane regions (helical) follow at residues 32–52 (WMIV…SLFA) and 425–445 (ILIV…LVLM).

Belongs to the etk/wzc family.

It is found in the cell inner membrane. The enzyme catalyses L-tyrosyl-[protein] + ATP = O-phospho-L-tyrosyl-[protein] + ADP + H(+). It participates in glycan metabolism; exopolysaccharide biosynthesis. In terms of biological role, involved in the biosynthesis of amylovoran which functions as a virulence factor. The polypeptide is Putative tyrosine-protein kinase AmsA (amsA) (Erwinia amylovora (Fire blight bacteria)).